A 102-amino-acid chain; its full sequence is Putative nuclear receptor corepressor 1-like protein NCOR1P1 (102 aa).

A compositionally biased stretch (polar residues) spans 1–18 (MSSSGYPPNQGAFSTEQS). Residues 1 to 68 (MSSSGYPPNQ…DQNASPSKLS (68 aa)) form a disordered region. The stretch at 68–100 (SKEELIECMDRVDREIAKVEQQILKLKKKQVKV) forms a coiled coil.

It belongs to the N-CoR nuclear receptor corepressors family.

This is Putative nuclear receptor corepressor 1-like protein NCOR1P1 (NCOR1P1) from Homo sapiens (Human).